The primary structure comprises 153 residues: Transcriptional repressor NrdR (153 aa).

The segment at 3-34 (CPFCGKENTRVIDSRPADDCSSIRRRRQCDEC) is a zinc-finger region. The region spanning 49–139 (LVVIKKDNNR…VYREFKDVNT (91 aa)) is the ATP-cone domain.

This sequence belongs to the NrdR family. The cofactor is Zn(2+).

Its function is as follows. Negatively regulates transcription of bacterial ribonucleotide reductase nrd genes and operons by binding to NrdR-boxes. In Lachnoclostridium phytofermentans (strain ATCC 700394 / DSM 18823 / ISDg) (Clostridium phytofermentans), this protein is Transcriptional repressor NrdR.